The primary structure comprises 115 residues: Large ribosomal subunit protein bL20 (115 aa).

Belongs to the bacterial ribosomal protein bL20 family.

In terms of biological role, binds directly to 23S ribosomal RNA and is necessary for the in vitro assembly process of the 50S ribosomal subunit. It is not involved in the protein synthesizing functions of that subunit. In Chlorobium limicola (strain DSM 245 / NBRC 103803 / 6330), this protein is Large ribosomal subunit protein bL20.